Here is a 208-residue protein sequence, read N- to C-terminus: Pectinesterase inhibitor 6 (208 aa).

A signal peptide spans 1–30 (MTSSSSSPITFTLLLLLSLLVALNPNPSLA). Cysteine 53 and cysteine 62 are oxidised to a cystine. 2 N-linked (GlcNAc...) asparagine glycosylation sites follow: asparagine 54 and asparagine 75. A disulfide bridge links cysteine 118 with cysteine 165.

The protein belongs to the PMEI family.

The protein localises to the secreted. It localises to the extracellular space. Its subcellular location is the apoplast. Its function is as follows. Pectin methylesterase (PME) inhibitor that targets PME from seeds and modulates PME activity and pectin methylesterification during seed germination. Promotes mucilage release by limiting methylesterification of homogalacturonan in seed coat epidermal cells. The sequence is that of Pectinesterase inhibitor 6 from Arabidopsis thaliana (Mouse-ear cress).